The following is a 171-amino-acid chain: tRNA-specific adenosine deaminase (171 aa).

A CMP/dCMP-type deaminase domain is found at 6–133 (EEQTYFMQEA…ERLNHRVQVE (128 aa)). A Zn(2+)-binding site is contributed by His57. Residue Glu59 is the Proton donor of the active site. Zn(2+)-binding residues include Cys87 and Cys90.

The protein belongs to the cytidine and deoxycytidylate deaminase family. Homodimer. Zn(2+) serves as cofactor.

The enzyme catalyses adenosine(34) in tRNA + H2O + H(+) = inosine(34) in tRNA + NH4(+). In terms of biological role, catalyzes the deamination of adenosine to inosine at the wobble position 34 of tRNA(Arg2). This chain is tRNA-specific adenosine deaminase, found in Streptococcus pyogenes serotype M1.